Here is a 1330-residue protein sequence, read N- to C-terminus: DNA-directed RNA polymerase subunit beta'' (1330 aa).

4 residues coordinate Zn(2+): Cys-214, Cys-282, Cys-289, and Cys-292.

It belongs to the RNA polymerase beta' chain family. RpoC2 subfamily. In plastids the minimal PEP RNA polymerase catalytic core is composed of four subunits: alpha, beta, beta', and beta''. When a (nuclear-encoded) sigma factor is associated with the core the holoenzyme is formed, which can initiate transcription. Zn(2+) serves as cofactor.

It localises to the plastid. It is found in the chloroplast. It carries out the reaction RNA(n) + a ribonucleoside 5'-triphosphate = RNA(n+1) + diphosphate. Functionally, DNA-dependent RNA polymerase catalyzes the transcription of DNA into RNA using the four ribonucleoside triphosphates as substrates. The sequence is that of DNA-directed RNA polymerase subunit beta'' from Physcomitrium patens (Spreading-leaved earth moss).